The chain runs to 451 residues: Probable glycine dehydrogenase (decarboxylating) subunit 1 (451 aa).

This sequence belongs to the GcvP family. N-terminal subunit subfamily. The glycine cleavage system is composed of four proteins: P, T, L and H. In this organism, the P 'protein' is a heterodimer of two subunits.

It carries out the reaction N(6)-[(R)-lipoyl]-L-lysyl-[glycine-cleavage complex H protein] + glycine + H(+) = N(6)-[(R)-S(8)-aminomethyldihydrolipoyl]-L-lysyl-[glycine-cleavage complex H protein] + CO2. In terms of biological role, the glycine cleavage system catalyzes the degradation of glycine. The P protein binds the alpha-amino group of glycine through its pyridoxal phosphate cofactor; CO(2) is released and the remaining methylamine moiety is then transferred to the lipoamide cofactor of the H protein. The protein is Probable glycine dehydrogenase (decarboxylating) subunit 1 of Thermococcus kodakarensis (strain ATCC BAA-918 / JCM 12380 / KOD1) (Pyrococcus kodakaraensis (strain KOD1)).